Reading from the N-terminus, the 287-residue chain is ATP synthase gamma chain (287 aa).

Belongs to the ATPase gamma chain family. As to quaternary structure, F-type ATPases have 2 components, CF(1) - the catalytic core - and CF(0) - the membrane proton channel. CF(1) has five subunits: alpha(3), beta(3), gamma(1), delta(1), epsilon(1). CF(0) has three main subunits: a, b and c.

The protein localises to the cell membrane. Functionally, produces ATP from ADP in the presence of a proton gradient across the membrane. The gamma chain is believed to be important in regulating ATPase activity and the flow of protons through the CF(0) complex. This Bacillus velezensis (strain DSM 23117 / BGSC 10A6 / LMG 26770 / FZB42) (Bacillus amyloliquefaciens subsp. plantarum) protein is ATP synthase gamma chain.